The sequence spans 385 residues: Glucans biosynthesis protein C (385 aa).

The next 10 helical transmembrane spans lie at 17–37 (AWLM…SHTW), 60–80 (MQVF…RYPL), 91–111 (VGIP…IMLQ), 137–157 (ISHL…VWIF), 173–193 (KFSM…YAVI), 212–232 (FIVM…LAFI), 239–259 (LFTT…VAYL), 274–294 (TESV…FSFG), 311–331 (ASLF…AYIT), and 338–358 (WLGF…LYEI).

It belongs to the acyltransferase 3 family. OpgC subfamily.

Its subcellular location is the cell membrane. It participates in glycan metabolism; osmoregulated periplasmic glucan (OPG) biosynthesis. Necessary for the succinyl substitution of periplasmic glucans. Could catalyze the transfer of succinyl residues from the cytoplasmic side of the membrane to the nascent glucan backbones on the periplasmic side of the membrane. The polypeptide is Glucans biosynthesis protein C (Escherichia coli (strain K12 / MC4100 / BW2952)).